A 363-amino-acid polypeptide reads, in one-letter code: Electron transfer flavoprotein subunit alpha, mitochondrial (363 aa).

The N-terminal 24 residues, 1 to 24 (MTRTVLLRALTKNKFVASNAPRSI), are a transit peptide targeting the mitochondrion. Residue 303-331 (LYMAFGVSGAIQHLAGIKDSKVIVAVNKD) coordinates FAD.

It belongs to the ETF alpha-subunit/FixB family. As to quaternary structure, heterodimer of an alpha and a beta subunit. It depends on FAD as a cofactor.

It is found in the mitochondrion matrix. Functionally, the electron transfer flavoprotein serves as a specific electron acceptor for several dehydrogenases, including five acyl-CoA dehydrogenases, glutaryl-CoA and sarcosine dehydrogenase. It transfers the electrons to the main mitochondrial respiratory chain via ETF-ubiquinone oxidoreductase (ETF dehydrogenase). Involved in leucine catabolism and in phytol degradation. This is Electron transfer flavoprotein subunit alpha, mitochondrial (ETFA) from Arabidopsis thaliana (Mouse-ear cress).